A 276-amino-acid polypeptide reads, in one-letter code: 2,3,4,5-tetrahydropyridine-2,6-dicarboxylate N-succinyltransferase (276 aa).

2 residues coordinate substrate: R108 and D145.

The protein belongs to the transferase hexapeptide repeat family. As to quaternary structure, homotrimer.

It is found in the cytoplasm. The enzyme catalyses (S)-2,3,4,5-tetrahydrodipicolinate + succinyl-CoA + H2O = (S)-2-succinylamino-6-oxoheptanedioate + CoA. Its pathway is amino-acid biosynthesis; L-lysine biosynthesis via DAP pathway; LL-2,6-diaminopimelate from (S)-tetrahydrodipicolinate (succinylase route): step 1/3. The chain is 2,3,4,5-tetrahydropyridine-2,6-dicarboxylate N-succinyltransferase from Caulobacter vibrioides (strain ATCC 19089 / CIP 103742 / CB 15) (Caulobacter crescentus).